Consider the following 303-residue polypeptide: AP2-like ethylene-responsive transcription factor At1g79700 (303 aa).

Positions 1-10 (MAKVSGRSKK) are enriched in basic residues. The segment at 1 to 55 (MAKVSGRSKKTIVDDEISDKTASASESASIALTSKRKRKSPPRNAPLQRSSPYRG) is disordered. Residues 20-32 (KTASASESASIAL) show a composition bias toward polar residues. 2 DNA-binding regions (AP2/ERF) span residues 52 to 118 (PYRG…LNFP) and 154 to 202 (KYRG…TNFD). The tract at residues 212–259 (AADKADSDSKPIRSPSREPESSDDNKSPKSEEVIEPSTSPEVIPTRRS) is disordered. The segment covering 214 to 243 (DKADSDSKPIRSPSREPESSDDNKSPKSEE) has biased composition (basic and acidic residues).

Belongs to the AP2/ERF transcription factor family. AP2 subfamily.

The protein localises to the nucleus. In terms of biological role, probably acts as a transcriptional activator. Binds to the GCC-box pathogenesis-related promoter element. May be involved in the regulation of gene expression by stress factors and by components of stress signal transduction pathways. The sequence is that of AP2-like ethylene-responsive transcription factor At1g79700 from Arabidopsis thaliana (Mouse-ear cress).